Here is an 840-residue protein sequence, read N- to C-terminus: Protein translocase subunit SecA (840 aa).

ATP-binding positions include glutamine 85, 103–107, and aspartate 492; that span reads GEGKT. Positions 787 to 822 are disordered; that stretch reads QRERVAKETGASHGGDSQEVKKKPVKKEPKVGRNDL. The span at 802 to 819 shows a compositional bias: basic and acidic residues; that stretch reads DSQEVKKKPVKKEPKVGR. Residues cysteine 823, cysteine 825, cysteine 834, and cysteine 835 each coordinate Zn(2+).

This sequence belongs to the SecA family. In terms of assembly, monomer and homodimer. Part of the essential Sec protein translocation apparatus which comprises SecA, SecYEG and auxiliary proteins SecDF. Other proteins may also be involved. The cofactor is Zn(2+).

Its subcellular location is the cell membrane. The protein resides in the cytoplasm. The catalysed reaction is ATP + H2O + cellular proteinSide 1 = ADP + phosphate + cellular proteinSide 2.. Functionally, part of the Sec protein translocase complex. Interacts with the SecYEG preprotein conducting channel. Has a central role in coupling the hydrolysis of ATP to the transfer of proteins into and across the cell membrane, serving as an ATP-driven molecular motor driving the stepwise translocation of polypeptide chains across the membrane. In Clostridium perfringens (strain ATCC 13124 / DSM 756 / JCM 1290 / NCIMB 6125 / NCTC 8237 / Type A), this protein is Protein translocase subunit SecA.